Consider the following 63-residue polypeptide: Large ribosomal subunit protein uL29 (63 aa).

This sequence belongs to the universal ribosomal protein uL29 family.

The sequence is that of Large ribosomal subunit protein uL29 from Pseudoalteromonas atlantica (strain T6c / ATCC BAA-1087).